Consider the following 424-residue polypeptide: Adenylosuccinate synthetase 2 (424 aa).

GTP contacts are provided by residues glycine 11 to lysine 17 and glycine 39 to threonine 41. The Proton acceptor role is filled by aspartate 12. The Mg(2+) site is built by aspartate 12 and glycine 39. Residues aspartate 12–lysine 15, asparagine 37–histidine 40, threonine 127, arginine 141, glutamine 223, threonine 238, and arginine 302 contribute to the IMP site. Catalysis depends on histidine 40, which acts as the Proton donor. Threonine 298–arginine 304 contributes to the substrate binding site. GTP is bound by residues arginine 304, lysine 330 to aspartate 332, and serine 412 to glycine 414.

This sequence belongs to the adenylosuccinate synthetase family. In terms of assembly, homodimer. Mg(2+) is required as a cofactor.

Its subcellular location is the cytoplasm. It catalyses the reaction IMP + L-aspartate + GTP = N(6)-(1,2-dicarboxyethyl)-AMP + GDP + phosphate + 2 H(+). Its pathway is purine metabolism; AMP biosynthesis via de novo pathway; AMP from IMP: step 1/2. Its function is as follows. Plays an important role in the de novo pathway of purine nucleotide biosynthesis. Catalyzes the first committed step in the biosynthesis of AMP from IMP. This is Adenylosuccinate synthetase 2 from Methanosarcina acetivorans (strain ATCC 35395 / DSM 2834 / JCM 12185 / C2A).